Consider the following 182-residue polypeptide: PRA1 family protein D (182 aa).

N-acetylalanine is present on A2. The next 3 helical transmembrane spans lie at 68-88, 107-127, and 129-149; these read LITR…WFFL, IVAV…GVWL, and ALTT…LRGT. The tract at residues 163–182 is disordered; sequence PMLSTSGGGNDGARGDYSGI.

It belongs to the PRA1 family. In terms of assembly, interacts with PRA1F2 and PRA1F3. Interacts with the cauliflower mosaic virus (CaMV) movement protein (via N-terminus). As to expression, expressed in hypocotyls, roots, lateral roots, lateral root caps, columella cells, leaves, shoot apex, stems and flowers.

The protein resides in the endosome membrane. Its function is as follows. May be involved in both secretory and endocytic intracellular trafficking in the endosomal/prevacuolar compartments. The chain is PRA1 family protein D (PRA1D) from Arabidopsis thaliana (Mouse-ear cress).